The primary structure comprises 491 residues: Protein nucleotidyltransferase YdiU (491 aa).

8 residues coordinate ATP: Gly-88, Gly-90, Arg-91, Lys-111, Asp-123, Gly-124, Arg-174, and Arg-181. Residue Asp-250 is the Proton acceptor of the active site. The Mg(2+) site is built by Asn-251 and Asp-260. Asp-260 serves as a coordination point for ATP.

This sequence belongs to the SELO family. It depends on Mg(2+) as a cofactor. Mn(2+) is required as a cofactor.

It carries out the reaction L-seryl-[protein] + ATP = 3-O-(5'-adenylyl)-L-seryl-[protein] + diphosphate. It catalyses the reaction L-threonyl-[protein] + ATP = 3-O-(5'-adenylyl)-L-threonyl-[protein] + diphosphate. The catalysed reaction is L-tyrosyl-[protein] + ATP = O-(5'-adenylyl)-L-tyrosyl-[protein] + diphosphate. The enzyme catalyses L-histidyl-[protein] + UTP = N(tele)-(5'-uridylyl)-L-histidyl-[protein] + diphosphate. It carries out the reaction L-seryl-[protein] + UTP = O-(5'-uridylyl)-L-seryl-[protein] + diphosphate. It catalyses the reaction L-tyrosyl-[protein] + UTP = O-(5'-uridylyl)-L-tyrosyl-[protein] + diphosphate. Functionally, nucleotidyltransferase involved in the post-translational modification of proteins. It can catalyze the addition of adenosine monophosphate (AMP) or uridine monophosphate (UMP) to a protein, resulting in modifications known as AMPylation and UMPylation. This chain is Protein nucleotidyltransferase YdiU, found in Bradyrhizobium diazoefficiens (strain JCM 10833 / BCRC 13528 / IAM 13628 / NBRC 14792 / USDA 110).